Here is a 295-residue protein sequence, read N- to C-terminus: Uridine and thymidine phosphorylase (295 aa).

Residues Arg-81 and 125 to 128 (RLGT) each bind phosphate. The substrate site is built by Gln-203 and Arg-205.

Belongs to the PNP/UDP phosphorylase family. Expressed in hypodermis, pharynx, spermatheca and gonad.

It catalyses the reaction uridine + phosphate = alpha-D-ribose 1-phosphate + uracil. It carries out the reaction thymidine + phosphate = 2-deoxy-alpha-D-ribose 1-phosphate + thymine. The catalysed reaction is 2'-deoxyuridine + phosphate = 2-deoxy-alpha-D-ribose 1-phosphate + uracil. Its pathway is pyrimidine metabolism; UMP biosynthesis via salvage pathway; uracil from uridine (phosphorylase route): step 1/1. The protein operates within pyrimidine metabolism; dTMP biosynthesis via salvage pathway; dTMP from thymine: step 1/2. Catalyzes the reversible phosphorylytic cleavage of uridine and thymidine to uracil and ribose-phosphate or thymine and deoxyribose-1-phosphate. The produced molecules are then utilized as carbon and energy sources or in the rescue of pyrimidine bases for nucleotide synthesis. Required for normal lifespan. This is Uridine and thymidine phosphorylase from Caenorhabditis elegans.